The chain runs to 149 residues: FAD synthase (149 aa).

Residues 15-16, 20-23, and Asp-101 each bind ATP; these read VF and HVGH.

It belongs to the archaeal FAD synthase family. Homodimer. The cofactor is a divalent metal cation.

It carries out the reaction FMN + ATP + H(+) = FAD + diphosphate. It participates in cofactor biosynthesis; FAD biosynthesis; FAD from FMN: step 1/1. In terms of biological role, catalyzes the transfer of the AMP portion of ATP to flavin mononucleotide (FMN) to produce flavin adenine dinucleotide (FAD) coenzyme. In Thermococcus kodakarensis (strain ATCC BAA-918 / JCM 12380 / KOD1) (Pyrococcus kodakaraensis (strain KOD1)), this protein is FAD synthase.